A 590-amino-acid chain; its full sequence is Aspartate--tRNA(Asp/Asn) ligase (590 aa).

Glutamate 175 lines the L-aspartate pocket. The segment at 199-202 (QQYK) is aspartate. L-aspartate contacts are provided by arginine 221 and histidine 450. 221–223 (RDE) serves as a coordination point for ATP. Glutamate 484 is a binding site for ATP. Position 491 (arginine 491) interacts with L-aspartate. An ATP-binding site is contributed by 536 to 539 (GVDR).

It belongs to the class-II aminoacyl-tRNA synthetase family. Type 1 subfamily. In terms of assembly, homodimer.

It is found in the cytoplasm. The catalysed reaction is tRNA(Asx) + L-aspartate + ATP = L-aspartyl-tRNA(Asx) + AMP + diphosphate. Functionally, aspartyl-tRNA synthetase with relaxed tRNA specificity since it is able to aspartylate not only its cognate tRNA(Asp) but also tRNA(Asn). Reaction proceeds in two steps: L-aspartate is first activated by ATP to form Asp-AMP and then transferred to the acceptor end of tRNA(Asp/Asn). In Rhodopseudomonas palustris (strain HaA2), this protein is Aspartate--tRNA(Asp/Asn) ligase.